The primary structure comprises 354 residues: Guanine nucleotide-binding protein subunit alpha-14 (354 aa).

Residues 33-354 (RELKLLLLGT…QLNLREFNLV (322 aa)) enclose the G-alpha domain. Residues 36-49 (KLLLLGTGESGKST) form a G1 motif region. GTP-binding positions include 41 to 48 (GTGESGKS), 175 to 181 (LRVRVPT), 200 to 204 (DVGGQ), 269 to 272 (NKKD), and Ala-326. Mg(2+) is bound by residues Ser-48 and Thr-181. A G2 motif region spans residues 173 to 181 (DVLRVRVPT). The interval 196 to 205 (FRMVDVGGQR) is G3 motif. The interval 265–272 (ILFLNKKD) is G4 motif. The interval 324–329 (TCATDT) is G5 motif.

Belongs to the G-alpha family. G(q) subfamily. In terms of assembly, g proteins are composed of 3 units; alpha, beta and gamma. The alpha chain contains the guanine nucleotide binding site.

Its function is as follows. Guanine nucleotide-binding proteins (G proteins) are involved as modulators or transducers in various transmembrane signaling systems. Acts as an activator of phospholipase C. Mediates responses to trypsin. The protein is Guanine nucleotide-binding protein subunit alpha-14 (gna14) of Xenopus laevis (African clawed frog).